Reading from the N-terminus, the 351-residue chain is sn-1 oleoyl-lipid 12-desaturase (351 aa).

A disordered region spans residues 1–20; sequence MTLSIVKSEDSSSRPSAVPS. 2 consecutive transmembrane segments (helical) span residues 44–62 and 68–88; these read AWMTVIINVVMVGLGWLGI and FLLPVVWVFTGTALTGFFVIG. The Histidine box-1 signature appears at 89–93; it reads HDCGH. A helical transmembrane segment spans residues 100-120; the sequence is VWVNDWVGHILFLPIIYPFHS. Residues 125–129 carry the Histidine box-2 motif; sequence HNQHH. The next 2 membrane-spanning stretches (helical) occupy residues 199 to 219 and 221 to 241; these read LLVIGAAAIAFPTMILTIGVW and FVKFWVIPWLVFHFWMSTFTL. Residues 289–293 carry the Histidine box-3 motif; sequence HHVTT.

Belongs to the fatty acid desaturase type 2 family. Fe(2+) serves as cofactor.

The protein localises to the cellular thylakoid membrane. The catalysed reaction is a 1-[(9Z)-octadecenoyl]-2-acyl-glycerolipid + 2 reduced [2Fe-2S]-[ferredoxin] + O2 + 2 H(+) = a 1-[(9Z,12Z)-octadecdienoyl]-2-acyl-glycerolipid + 2 oxidized [2Fe-2S]-[ferredoxin] + 2 H2O. It functions in the pathway lipid metabolism; polyunsaturated fatty acid biosynthesis. In terms of biological role, desaturase involved in fatty acid biosynthesis. Introduces a double bond at carbon 12 of oleoyl groups (18:1) attached to the sn-1 position of the glycerol moiety of membrane glycerolipids. The sequence is that of sn-1 oleoyl-lipid 12-desaturase from Arthrospira platensis (Spirulina platensis).